The chain runs to 1005 residues: Retinoblastoma-related protein (1005 aa).

Residues 404 to 605 (TPVSTAMTTA…EKGSSMYNSL (202 aa)) form a domain A region. The pocket stretch occupies residues 404 to 853 (TPVSTAMTTA…NEIFIPSVKP (450 aa)). Positions 606-722 (TIARPNLSNE…HPTRGETCAE (117 aa)) are spacer. Positions 723–853 (TAVNLFFSKI…NEIFIPSVKP (131 aa)) are domain B. Polar residues predominate over residues 863–873 (VPKNPNNQVSE). Positions 863-899 (VPKNPNNQVSETNKKDESGPCPCPGSPKVSSFPSLPD) are disordered.

This sequence belongs to the retinoblastoma protein (RB) family.

It localises to the nucleus. Functionally, regulator of biological processes that recruits a histone deacetylase to control gene transcription. May play a role in the entry into mitosis, negatively regulating the cell proliferation. Formation of stable complexes with geminiviridae replication-associated proteins may create a cellular environment which favors viral DNA replication. In Pilosella piloselloides (Glaucous king-devil hawkweed), this protein is Retinoblastoma-related protein (RBR).